Here is a 346-residue protein sequence, read N- to C-terminus: uncharacterized protein (346 aa).

Belongs to the Gfo/Idh/MocA family.

This is an uncharacterized protein from Escherichia coli (strain K12).